Consider the following 350-residue polypeptide: Protein-arginine kinase (350 aa).

The region spanning 21 to 253 (IVISSRIRLA…VRLADQEREA (233 aa)) is the Phosphagen kinase C-terminal domain. ATP-binding positions include 24–28 (SSRIR), His90, Arg124, 175–179 (RASTM), and 206–211 (RGLYGE). The short motif at 336 to 341 (RDVHRA) is the RDXXRA motif of the pArg binding pocket involved in allosteric regulation element.

This sequence belongs to the ATP:guanido phosphotransferase family.

It carries out the reaction L-arginyl-[protein] + ATP = N(omega)-phospho-L-arginyl-[protein] + ADP + H(+). Appears to be allosterically activated by the binding of pArg-containing polypeptides to the pArg-binding pocket localized in the C-terminal domain of McsB. Functionally, catalyzes the specific phosphorylation of arginine residues in proteins. The sequence is that of Protein-arginine kinase from Moorella thermoacetica (strain ATCC 39073 / JCM 9320).